Reading from the N-terminus, the 586-residue chain is MPFALHGIPVSRGVAIGRAHLLAPAALDVSHYLVDEDQLDAEVERLRAARAAVRAELAALKRDLPRDAPEELGAFLDVHAMILDDEALAREPEALIRGRRYNAEWALTTRLEELMRQFDEIEDEYLRERKTDIRQVVERILKALAGAPVLVPAPVPALAADGEAATGVIVVAHDIAPADMLQFRHTVFHGFVTDMGGRTSHTAIVARSLDIPAAVGVQSASELIRQDDWIIIDGDAGLVIVDPTAIILEEYRHRQSERALEKKRLQRLRHTPAVTLDGLEIDLLANIEMAEDAGAALAAGAVGVGLFRSEFLFMNRRDELPGEDEQFQAYRGAVDAMHGLPVTIRTIDIGADKPLDARGDEFETALNPALGLRAIRWSLSEPGMFLTQLRALLRASAFGPVRLLVPMLAHASEIDQTLALIAKAKRQLDERGEAYDPGMKVGAMIEIPAAVLLLPLFLRKMDFLSIGTNDLIQYTLAIDRADNAVAHLFDPLHPAVLQLVARTIREANRAGVPVAVCGEMAGDPSMTRLLLGMGLREFSMHPAQLLRVKQEILHAHCERLEPLVDQVLQAFDPEEQAAALRQLARP.

Histidine 201 serves as the catalytic Tele-phosphohistidine intermediate. The phosphoenolpyruvate site is built by arginine 308 and arginine 345. The Mg(2+) site is built by glutamate 446 and aspartate 470. Residues 469-470 and arginine 480 each bind phosphoenolpyruvate; that span reads ND. Catalysis depends on cysteine 517, which acts as the Proton donor.

This sequence belongs to the PEP-utilizing enzyme family. As to quaternary structure, homodimer. It depends on Mg(2+) as a cofactor.

The protein localises to the cytoplasm. It catalyses the reaction L-histidyl-[protein] + phosphoenolpyruvate = N(pros)-phospho-L-histidyl-[protein] + pyruvate. Its function is as follows. General (non sugar-specific) component of the phosphoenolpyruvate-dependent sugar phosphotransferase system (sugar PTS). This major carbohydrate active-transport system catalyzes the phosphorylation of incoming sugar substrates concomitantly with their translocation across the cell membrane. Enzyme I transfers the phosphoryl group from phosphoenolpyruvate (PEP) to the phosphoryl carrier protein (HPr). This Cupriavidus necator (strain ATCC 17699 / DSM 428 / KCTC 22496 / NCIMB 10442 / H16 / Stanier 337) (Ralstonia eutropha) protein is Phosphoenolpyruvate-protein phosphotransferase.